A 131-amino-acid polypeptide reads, in one-letter code: Acyl carrier protein 3, mitochondrial (131 aa).

The N-terminal 39 residues, methionine 1–threonine 39, are a transit peptide targeting the mitochondrion. One can recognise a Carrier domain in the interval aspartate 49–threonine 124. Serine 84 bears the O-(pantetheine 4'-phosphoryl)serine mark.

The protein belongs to the acyl carrier protein (ACP) family. Complex I is composed of at least 49 different subunits. In terms of processing, 4'-phosphopantetheine is transferred from CoA to a specific serine of the apo-ACP-like protein.

It localises to the mitochondrion. It participates in lipid metabolism; fatty acid biosynthesis. In terms of biological role, carrier of the growing fatty acid chain in fatty acid biosynthesis. May be involved in the synthesis of short and medium chain fatty acids. Accessory and non-catalytic subunit of the mitochondrial membrane respiratory chain NADH dehydrogenase (Complex I), which functions in the transfer of electrons from NADH to the respiratory chain. In Arabidopsis thaliana (Mouse-ear cress), this protein is Acyl carrier protein 3, mitochondrial (MTACP2).